The primary structure comprises 4963 residues: Kettin homolog (4963 aa).

3 consecutive Ig-like domains span residues 18-105, 133-220, and 303-392; these read PTFI…TCIL, PSAP…EAIS, and PIIR…ARIE. Disordered regions lie at residues 396–420, 466–501, 557–578, 598–622, and 652–696; these read LSVP…QQQQ, RRQL…EEER, IRPH…RQEV, QLYQ…QQRF, and TNGG…GHEH. 3 stretches are compositionally biased toward basic and acidic residues: residues 399–417, 466–475, and 484–501; these read PDER…RDRQ, RRQLEHEKRL, and FERE…EEER. The stretch at 401-517 forms a coiled coil; the sequence is ERRKENQLRE…KHLRQQQQTQ (117 aa). The segment covering 557–576 has biased composition (low complexity); that stretch reads IRPHQQQQQHYQQQQQSPRQ. Low complexity predominate over residues 658–685; that stretch reads AANGSAKTANGSANGSANGSAVHAANGG. 20 consecutive Ig-like domains span residues 706–796, 806–893, 937–1027, 1065–1155, 1199–1281, 1462–1554, 1594–1687, 1728–1819, 1992–2085, 2126–2217, 2258–2350, 2391–2481, 2522–2613, 2654–2745, 2787–2878, 2919–3010, 3051–3141, 3182–3273, 3314–3407, and 3448–3539; these read PQFL…FSLN, PEFT…GRVV, PKFE…ANIA, PNFH…ATII, FHCE…AELT, PKFL…ITVT, PPTF…ATIR, PAFV…VDIN, PPVF…IFLE, PTFT…CTVK, PKFV…ANFT, PQFI…AQLT, PKFV…GQLS, PSFV…ANVG, PQWV…ATVT, PNFL…ASIR, PAIT…ATLK, PRFI…ATIE, PAIV…FEVS, and PVFI…TKLT. A disulfide bridge connects residues Cys-827 and Cys-877. Cysteines 1201 and 1265 form a disulfide. Cysteines 1618 and 1671 form a disulfide. Disulfide bonds link Cys-2016-Cys-2069 and Cys-2148-Cys-2201. Positions 3567 to 3583 are enriched in basic and acidic residues; sequence EAPRPAREDAPDADHGP. Residues 3567–3590 form a disordered region; sequence EAPRPAREDAPDADHGPPKFTSAL. 5 consecutive Ig-like domains span residues 3584–3677, 3720–3811, 3821–3913, 3962–4052, and 4098–4185; these read PKFT…LKVV, PSFS…GKIA, PQVV…TKIT, PEFR…AKLA, and PQFT…ATLD. Disulfide bonds link Cys-3606-Cys-3659 and Cys-3742-Cys-3795. The segment at 4193–4963 is required for F-actin binding; that stretch reads RQTKLRPANF…TSQAKLTLSR (771 aa). The segment covering 4319 to 4329 has biased composition (basic and acidic residues); it reads DQQEVGWERPD. The tract at residues 4319-4357 is disordered; sequence DQQEVGWERPDWAGQDGTSKLPGADEGRFKKLPTPAPEL. 4 consecutive Ig-like domains span residues 4546 to 4634, 4645 to 4733, 4752 to 4842, and 4872 to 4960; these read PTIS…ANLT, PDFS…ARLN, PRFT…LVLT, and PHFI…AKLT.

As to quaternary structure, interacts (via Ig-like domains) with F-actin. As to expression, expressed in the pharyngeal, body wall, and anal depressor muscles. Expression in these muscles is higher in hermaphrodites than in males. Expressed in the vulva and the myoepithelial sheath of the proximal ovary. Expressed in the proximal gonad of males. Not expressed in the dense bodies of the obliquely striated body wall muscle.

The protein localises to the cytoplasm. Its subcellular location is the myofibril. It is found in the sarcomere. It localises to the cytoskeleton. Positively regulates actin filament organization and provides mechanical stability to the myofibrils during body wall muscle contraction. Required for the organization of sarcomeric actin filaments and myosin protein myo-3 in striated body wall muscle cells. Not required for assembly of dense bodies, which are a type of integrin-based adhesion structure that link the plasma membrane to thin filaments of myofibrils, in body wall muscle. Not required for the atn-1 protein to localize to the dense bodies. The chain is Kettin homolog from Caenorhabditis elegans.